The chain runs to 64 residues: Prokaryotic ubiquitin-like protein UBact (64 aa).

The tract at residues 1–64 (MFNGEEVILF…SERYRQRTGE (64 aa)) is disordered. The segment covering 22–64 (REIHKDAPAPKRPETKKTGDRLMDRMKKVDPNQSERYRQRTGE) has biased composition (basic and acidic residues). Glutamate 64 participates in a covalent cross-link: Isoglutamyl lysine isopeptide (Glu-Lys) (interchain with K-? in acceptor proteins).

The protein belongs to the ubiquitin-like protein UBact family.

May function as a protein modifier covalently attached to lysine residues of substrate proteins. This may serve to target the modified proteins for degradation by proteasomes. The protein is Prokaryotic ubiquitin-like protein UBact of Leptospirillum ferriphilum (strain ML-04).